The following is a 426-amino-acid chain: Serine--tRNA ligase (426 aa).

231–233 contributes to the L-serine binding site; it reads TAE. 262-264 contributes to the ATP binding site; it reads RSE. E285 contributes to the L-serine binding site. 349–352 is a binding site for ATP; the sequence is EISS. Position 385 (S385) interacts with L-serine.

The protein belongs to the class-II aminoacyl-tRNA synthetase family. Type-1 seryl-tRNA synthetase subfamily. In terms of assembly, homodimer. The tRNA molecule binds across the dimer.

The protein localises to the cytoplasm. It carries out the reaction tRNA(Ser) + L-serine + ATP = L-seryl-tRNA(Ser) + AMP + diphosphate + H(+). The catalysed reaction is tRNA(Sec) + L-serine + ATP = L-seryl-tRNA(Sec) + AMP + diphosphate + H(+). It functions in the pathway aminoacyl-tRNA biosynthesis; selenocysteinyl-tRNA(Sec) biosynthesis; L-seryl-tRNA(Sec) from L-serine and tRNA(Sec): step 1/1. Its function is as follows. Catalyzes the attachment of serine to tRNA(Ser). Is also able to aminoacylate tRNA(Sec) with serine, to form the misacylated tRNA L-seryl-tRNA(Sec), which will be further converted into selenocysteinyl-tRNA(Sec). The sequence is that of Serine--tRNA ligase from Lysinibacillus sphaericus (strain C3-41).